A 203-amino-acid chain; its full sequence is Large ribosomal subunit protein bL25 (203 aa).

It belongs to the bacterial ribosomal protein bL25 family. CTC subfamily. As to quaternary structure, part of the 50S ribosomal subunit; part of the 5S rRNA/L5/L18/L25 subcomplex. Contacts the 5S rRNA. Binds to the 5S rRNA independently of L5 and L18.

Functionally, this is one of the proteins that binds to the 5S RNA in the ribosome where it forms part of the central protuberance. This is Large ribosomal subunit protein bL25 from Wolbachia pipientis wMel.